A 566-amino-acid chain; its full sequence is Solute carrier family 22 member 16 (566 aa).

A helical membrane pass occupies residues 20–40 (FASAFQTISCGIHYLASVFIA). 3 N-linked (GlcNAc...) asparagine glycosylation sites follow: Asn52, Asn60, and Asn112. 5 consecutive transmembrane segments (helical) span residues 149–169 (LIQP…GDIA), 176–196 (PIIW…AFTF), 201–221 (FVIV…VVFV), 237–257 (MHVH…GFLV), and 261–281 (WIYQ…CWML). N-linked (GlcNAc...) asparagine glycosylation is present at Asn344. 6 consecutive transmembrane segments (helical) span residues 351 to 371 (TITV…FALN), 381 to 401 (LNLF…CLGM), 408 to 428 (NTLA…MLIP), 436 to 456 (IAMS…IYLY), 468 to 488 (LAVG…PFCV), and 493 to 513 (VWIF…GILT).

The protein belongs to the major facilitator (TC 2.A.1) superfamily. Organic cation transporter (TC 2.A.1.19) family.

Its subcellular location is the membrane. In terms of biological role, high affinity carnitine transporter. This is Solute carrier family 22 member 16 (slc22a16) from Xenopus laevis (African clawed frog).